Consider the following 368-residue polypeptide: 3-dehydroquinate synthase (368 aa).

NAD(+) contacts are provided by residues 109–113, 133–134, Lys-146, Lys-155, and 173–176; these read GVIGD, TS, and TLQT. Zn(2+) contacts are provided by Glu-188, His-253, and His-270.

It belongs to the sugar phosphate cyclases superfamily. Dehydroquinate synthase family. The cofactor is Co(2+). It depends on Zn(2+) as a cofactor. NAD(+) is required as a cofactor.

Its subcellular location is the cytoplasm. The enzyme catalyses 7-phospho-2-dehydro-3-deoxy-D-arabino-heptonate = 3-dehydroquinate + phosphate. Its pathway is metabolic intermediate biosynthesis; chorismate biosynthesis; chorismate from D-erythrose 4-phosphate and phosphoenolpyruvate: step 2/7. Its function is as follows. Catalyzes the conversion of 3-deoxy-D-arabino-heptulosonate 7-phosphate (DAHP) to dehydroquinate (DHQ). The protein is 3-dehydroquinate synthase of Synechococcus sp. (strain ATCC 27144 / PCC 6301 / SAUG 1402/1) (Anacystis nidulans).